Reading from the N-terminus, the 350-residue chain is C-X-C chemokine receptor type 1 (350 aa).

At 1-39 (MSNITDPQMWDFDDLNFTGMPPADEDYSPCMLETETLNK) the chain is on the extracellular side. N-linked (GlcNAc...) asparagine glycans are attached at residues Asn3 and Asn16. Residues 40–66 (YVVIIAYALVFLLSLLGNSLVMLVILY) traverse the membrane as a helical segment. The Cytoplasmic segment spans residues 67–75 (SRVGRSVTD). The helical transmembrane segment at 76-96 (VYLLNLALADLLFALTLPIWA) threads the bilayer. Residues 97-111 (ASKVNGWIFGTFLCK) are Extracellular-facing. Cys110 and Cys187 are joined by a disulfide. A helical transmembrane segment spans residues 112–133 (VVSLLKEVNFYSGILLLACISV). Residues 134–154 (DRYLAIVHATRTLTQKRHLVK) lie on the Cytoplasmic side of the membrane. A helical membrane pass occupies residues 155–174 (FVCLGCWGLSMNLSLPFFLF). Residues 175–199 (RQAYHPNNSSPVCYEVLGNDTAKWR) are Extracellular-facing. The helical transmembrane segment at 200–220 (MVLRILPHTFGFIVPLFVMLF) threads the bilayer. Residues 221 to 242 (CYGFTLRTLFKAHMGQKHRAMR) are Cytoplasmic-facing. The helical transmembrane segment at 243-264 (VIFAVVLIFLLCWLPYNLVLLA) threads the bilayer. Topologically, residues 265-285 (DTLMRTQVIQESCERRNNIGR) are extracellular. A helical membrane pass occupies residues 286 to 308 (ALDATEILGFLHSCLNPIIYAFI). Residues 309–350 (GQNFRHGFLKILAMHGLVSKEFLARHRVTSYTSSSVNVSSNL) are Cytoplasmic-facing.

The protein belongs to the G-protein coupled receptor 1 family. As to quaternary structure, interacts with IL8. Interacts with GNAI2.

It localises to the cell membrane. In terms of biological role, receptor to interleukin-8, which is a powerful neutrophils chemotactic factor. Binding of IL-8 to the receptor causes activation of neutrophils. This response is mediated via a G-protein that activates a phosphatidylinositol-calcium second messenger system. The chain is C-X-C chemokine receptor type 1 (CXCR1) from Homo sapiens (Human).